The chain runs to 526 residues: MGWLFLKVLLVGMVFSGLLYPFVDFSISGETRAPRPNIVIILADDMGWGDLGANWAETKDTTNLDKMASEGMRFVDFHAAASTCSPSRASLLTGRLGLRNGVTHNFAVTSVGGLPLNETTLAEVLQQAGYVTAMIGKWHLGHHGSYHPSFRGFDYYFGIPYSNDMGCTDNPGYNYPPCPACPQSDGRWRNPDRDCYTDVALPLYENLNIVEQPVNLSGLAQKYAERAVEFIEQASTSGRPFLLYVGLAHMHVPLSVTPPLANPQSQRLYRASLQEMDSLVGQIKDKVDHVAKENTLLWFAGDNGPWAQKCELAGSMGPFSGLWQTHQGGSPAKQTTWEGGHRVPALAYWPGRVPVNVTSTALLSLLDIFPTVIALAGASLPPNRKFDGVDVSEVLFGKSQTGHRVLFHPNSGAAGEYGALQTVRLDRYKAFYITGGAKACDGGVGPEQHHVSPLIFNLEDDAAESSPLQKGSPEYQELLPKVTRVLADVLQDIADDNSSQADYTQDPSVTPCCNPYQITCRCQPGE.

The N-terminal stretch at 1–16 is a signal peptide; it reads MGWLFLKVLLVGMVFS. Aspartate 44, aspartate 45, and cysteine 84 together coordinate Ca(2+). Cysteine 84 (nucleophile) is an active-site residue. Position 84 is a 3-oxoalanine (Cys) (cysteine 84). Asparagine 117 is a glycosylation site (N-linked (GlcNAc...) asparagine). Lysine 137 contacts substrate. Residue histidine 139 is part of the active site. Position 162 (serine 162) interacts with substrate. Residue asparagine 215 is glycosylated (N-linked (GlcNAc...) asparagine). Residue histidine 251 coordinates substrate. Ca(2+)-binding residues include aspartate 302 and asparagine 303. N-linked (GlcNAc...) asparagine glycosylation is found at asparagine 356 and asparagine 497.

This sequence belongs to the sulfatase family. Ca(2+) is required as a cofactor. In terms of processing, N-glycosylated with both high mannose and complex type sugars. Post-translationally, the conversion to 3-oxoalanine (also known as C-formylglycine, FGly), of a serine or cysteine residue in prokaryotes and of a cysteine residue in eukaryotes, is critical for catalytic activity. 63-kDa precursor undergoes proteolytic processing in two steps, yielding two fragments in the first step (apparent molecular masses of 44 and 18 kDa). In the second step, the 44-kDa fragment is processed further to the 34- and 10-kDa chains. The 10-kDa chain is a cleavage product of the 44-kDa fragment but linked to the 18-kDa chain through a disulfide bridge.

It is found in the lysosome. It catalyses the reaction an aryl sulfate + H2O = a phenol + sulfate + H(+). The enzyme catalyses Hydrolysis of the 3-sulfate groups of the N-sulfo-D-glucosamine 3-O-sulfate units of heparin.. Its function is as follows. Displays arylsulfatase activity at acidic pH towards the artificial substrate p-nitrocatechol sulfate. Catalyzes the hydrolysis of the 3-sulfate groups of the N-sulfo-D-glucosamine 3-O-sulfate units of heparin. This chain is Arylsulfatase G (Arsg), found in Rattus norvegicus (Rat).